Consider the following 252-residue polypeptide: Large ribosomal subunit protein uL4 (252 aa).

Belongs to the universal ribosomal protein uL4 family. In terms of assembly, part of the 50S ribosomal subunit.

One of the primary rRNA binding proteins, this protein initially binds near the 5'-end of the 23S rRNA. It is important during the early stages of 50S assembly. It makes multiple contacts with different domains of the 23S rRNA in the assembled 50S subunit and ribosome. In terms of biological role, forms part of the polypeptide exit tunnel. This Methanococcus aeolicus (strain ATCC BAA-1280 / DSM 17508 / OCM 812 / Nankai-3) protein is Large ribosomal subunit protein uL4.